Reading from the N-terminus, the 118-residue chain is Large ribosomal subunit protein uL18 (118 aa).

It belongs to the universal ribosomal protein uL18 family. Part of the 50S ribosomal subunit; part of the 5S rRNA/L5/L18/L25 subcomplex. Contacts the 5S and 23S rRNAs.

This is one of the proteins that bind and probably mediate the attachment of the 5S RNA into the large ribosomal subunit, where it forms part of the central protuberance. In Sulfurimonas denitrificans (strain ATCC 33889 / DSM 1251) (Thiomicrospira denitrificans (strain ATCC 33889 / DSM 1251)), this protein is Large ribosomal subunit protein uL18.